A 411-amino-acid chain; its full sequence is Serpin A3-1 (411 aa).

The first 24 residues, 1–24 (MRAERTSFLLALGLLVAGIRSVHC), serve as a signal peptide directing secretion. N-linked (GlcNAc...) asparagine glycosylation is found at Asn100, Asn180, Asn230, and Asn264.

It belongs to the serpin family. As to quaternary structure, homodimer. N-glycosylated. Detected in all tissues examined (at protein level). Abundantly expressed in liver, kidney and spleen. Lowest levels were observed in diaphragm muscle.

It localises to the cytoplasmic vesicle. The protein resides in the secretory vesicle. It is found in the chromaffin granule. Its subcellular location is the secreted. In terms of biological role, potent inhibitor of the serine proteases elastase and trypsin. Moderately inhibits the serine proteases plasmin and chymotrypsin, and the thiol protease proenkephalin-processing enzyme. Does not inhibit the serine proteases cathepsin G, furin, kallikrein, thrombin, tissue plasminogen activator and urokinase, or the cysteine proteases cathepsin B, cathepsin L and papain. The protein is Serpin A3-1 of Bos taurus (Bovine).